A 367-amino-acid chain; its full sequence is Regulator of fusion ref-1 (367 aa).

A compositionally biased stretch (pro residues) spans 1–10 (MVLISTPPPA). A disordered region spans residues 1 to 24 (MVLISTPPPAYAHNRKTSQEKKRR). The basic motif 1 stretch occupies residues 11–24 (YAHNRKTSQEKKRR). Positions 11–63 (YAHNRKTSQEKKRRDEINAKIKELQLLIQNESDNEKMTQGDVLNRAVEVVSRM) constitute a bHLH 1 domain. The interval 25-63 (DEINAKIKELQLLIQNESDNEKMTQGDVLNRAVEVVSRM) is helix-loop-helix motif 1. Disordered regions lie at residues 133-177 (RSES…RRDR) and 313-367 (ATSP…RPWE). Over residues 141–157 (SSMSYRSQSSSPSTSES) the composition is skewed to low complexity. Residues 161 to 177 (IDRKEVKKNREQDRRDR) are compositionally biased toward basic and acidic residues. A basic motif 2 region spans residues 162 to 175 (DRKEVKKNREQDRR). In terms of domain architecture, bHLH 2 spans 162–219 (DRKEVKKNREQDRRDRQGEAFDALKNFIIENKLMTSHQVEKMQRLNTLDIIIAYIQNK). Positions 176–219 (DRQGEAFDALKNFIIENKLMTSHQVEKMQRLNTLDIIIAYIQNK) are helix-loop-helix motif 2. The span at 313 to 354 (ATSPKSQQSPSYSLDSPPPSSDTSSSSIETPSTPNENSNSNP) shows a compositional bias: low complexity. Residues 356–367 (ASRKSKLFRPWE) are compositionally biased toward basic residues.

Interacts with unc-37.

The protein resides in the nucleus. Probable transcription factor. Binds 5'-TGCCACGTGTCCA-3' in vitro, probably via the E-box motif 5'-CA[TC][AG]TG-3'. Acts in embryonic development in a Notch-dependent manner, perhaps as a direct target of transcriptional regulator lag-1 in the Notch signaling pathway. Also acts in embryonic development in a Notch-independent manner. Plays a role in both Notch-dependent and -independent pathways in the execution of neuronal lineage decisions in the embryo. Also involved in regulating cell fate leading to formation of neuronal structures known as postdeirids. Involved in the pattern of cell fusion with a large syncytium known as hyp-7, during larval development, in hermaphrodites. Plays a role in regulating the activity of homeobox protein mab-5 in Pn.p cells. In Caenorhabditis elegans, this protein is Regulator of fusion ref-1.